A 533-amino-acid chain; its full sequence is 2-succinyl-5-enolpyruvyl-6-hydroxy-3-cyclohexene-1-carboxylate synthase (533 aa).

Belongs to the TPP enzyme family. MenD subfamily. In terms of assembly, homodimer. Requires Mg(2+) as cofactor. Mn(2+) serves as cofactor. It depends on thiamine diphosphate as a cofactor.

It catalyses the reaction isochorismate + 2-oxoglutarate + H(+) = 5-enolpyruvoyl-6-hydroxy-2-succinyl-cyclohex-3-ene-1-carboxylate + CO2. Its pathway is quinol/quinone metabolism; 1,4-dihydroxy-2-naphthoate biosynthesis; 1,4-dihydroxy-2-naphthoate from chorismate: step 2/7. The protein operates within quinol/quinone metabolism; menaquinone biosynthesis. In terms of biological role, catalyzes the thiamine diphosphate-dependent decarboxylation of 2-oxoglutarate and the subsequent addition of the resulting succinic semialdehyde-thiamine pyrophosphate anion to isochorismate to yield 2-succinyl-5-enolpyruvyl-6-hydroxy-3-cyclohexene-1-carboxylate (SEPHCHC). This Akkermansia muciniphila (strain ATCC BAA-835 / DSM 22959 / JCM 33894 / BCRC 81048 / CCUG 64013 / CIP 107961 / Muc) protein is 2-succinyl-5-enolpyruvyl-6-hydroxy-3-cyclohexene-1-carboxylate synthase.